The sequence spans 89 residues: Small ribosomal subunit protein uS15 (89 aa).

It belongs to the universal ribosomal protein uS15 family. In terms of assembly, part of the 30S ribosomal subunit. Forms a bridge to the 50S subunit in the 70S ribosome, contacting the 23S rRNA.

One of the primary rRNA binding proteins, it binds directly to 16S rRNA where it helps nucleate assembly of the platform of the 30S subunit by binding and bridging several RNA helices of the 16S rRNA. In terms of biological role, forms an intersubunit bridge (bridge B4) with the 23S rRNA of the 50S subunit in the ribosome. This chain is Small ribosomal subunit protein uS15, found in Aliivibrio fischeri (strain ATCC 700601 / ES114) (Vibrio fischeri).